The primary structure comprises 202 residues: MSRYRGPRVRIIRRLGTLPGLTNKTSKLKSSSINQSTSNKKISQYRIRLEEKQKLRFHYGITERQLLNYVRIARKAKGSTGEVLLQLLEMRSDNVIFRLGMAPTIPGARQLVNHRHILVNDCIVDIPSYRCKPQDFITIKNQPKSETMISKNIELYQKSKVPNHLTYSSLEKKGLVNQILDRESIGLKINELLVVEYYSRQA.

The S4 RNA-binding domain occupies 90-158 (MRSDNVIFRL…ISKNIELYQK (69 aa)).

It belongs to the universal ribosomal protein uS4 family. Part of the 30S ribosomal subunit. Contacts protein S5. The interaction surface between S4 and S5 is involved in control of translational fidelity.

The protein localises to the plastid. It is found in the chloroplast. In terms of biological role, one of the primary rRNA binding proteins, it binds directly to 16S rRNA where it nucleates assembly of the body of the 30S subunit. With S5 and S12 plays an important role in translational accuracy. The polypeptide is Small ribosomal subunit protein uS4c (rps4) (Anthoceros punctatus (Hornwort)).